Reading from the N-terminus, the 692-residue chain is Elongation factor G (692 aa).

In terms of domain architecture, tr-type G spans 8–283 (DKYRNIGIMA…AVVDYMPSPL (276 aa)). GTP contacts are provided by residues 17–24 (AHIDAGKT), 81–85 (DTPGH), and 135–138 (NKMD).

Belongs to the TRAFAC class translation factor GTPase superfamily. Classic translation factor GTPase family. EF-G/EF-2 subfamily.

Its subcellular location is the cytoplasm. Functionally, catalyzes the GTP-dependent ribosomal translocation step during translation elongation. During this step, the ribosome changes from the pre-translocational (PRE) to the post-translocational (POST) state as the newly formed A-site-bound peptidyl-tRNA and P-site-bound deacylated tRNA move to the P and E sites, respectively. Catalyzes the coordinated movement of the two tRNA molecules, the mRNA and conformational changes in the ribosome. The protein is Elongation factor G of Trichlorobacter lovleyi (strain ATCC BAA-1151 / DSM 17278 / SZ) (Geobacter lovleyi).